The following is a 288-amino-acid chain: Ribosomal RNA small subunit methyltransferase I (288 aa).

It belongs to the methyltransferase superfamily. RsmI family.

Its subcellular location is the cytoplasm. It carries out the reaction cytidine(1402) in 16S rRNA + S-adenosyl-L-methionine = 2'-O-methylcytidine(1402) in 16S rRNA + S-adenosyl-L-homocysteine + H(+). Its function is as follows. Catalyzes the 2'-O-methylation of the ribose of cytidine 1402 (C1402) in 16S rRNA. This Vibrio cholerae serotype O1 (strain ATCC 39315 / El Tor Inaba N16961) protein is Ribosomal RNA small subunit methyltransferase I.